The following is a 435-amino-acid chain: ATP-dependent protease ATPase subunit HslU (435 aa).

Residues Ile18, 60–65 (GVGKTE), Asp248, Glu313, and Arg385 contribute to the ATP site.

Belongs to the ClpX chaperone family. HslU subfamily. As to quaternary structure, a double ring-shaped homohexamer of HslV is capped on each side by a ring-shaped HslU homohexamer. The assembly of the HslU/HslV complex is dependent on binding of ATP.

Its subcellular location is the cytoplasm. In terms of biological role, ATPase subunit of a proteasome-like degradation complex; this subunit has chaperone activity. The binding of ATP and its subsequent hydrolysis by HslU are essential for unfolding of protein substrates subsequently hydrolyzed by HslV. HslU recognizes the N-terminal part of its protein substrates and unfolds these before they are guided to HslV for hydrolysis. The protein is ATP-dependent protease ATPase subunit HslU of Rhizobium etli (strain ATCC 51251 / DSM 11541 / JCM 21823 / NBRC 15573 / CFN 42).